Reading from the N-terminus, the 391-residue chain is Homocysteine-responsive endoplasmic reticulum-resident ubiquitin-like domain member 1 protein (391 aa).

M1 carries the post-translational modification N-acetylmethionine. Topologically, residues M1–D263 are cytoplasmic. Residues V10–L72 enclose the Ubiquitin-like domain. The disordered stretch occupies residues N90–R126. Positions P95–G124 are enriched in polar residues. Positions Q115 to S200 are interaction with UBQLN1. S135 bears the Phosphoserine mark. The chain crosses the membrane as a helical span at residues W264–Y284. Topologically, residues S285–R289 are lumenal. Residues F290–F310 traverse the membrane as a helical segment. The Cytoplasmic segment spans residues R311–N391. The tract at residues N317–H361 is disordered. A compositionally biased stretch (basic and acidic residues) spans D346 to H361.

As to quaternary structure, interacts with PSEN1 and PSEN2. Interacts with UBXN6. Interacts with UBQLN1, UBQLN2 and UBQLN4. Component of the HRD1 complex, which comprises at least SYNV1/HRD1, FAM8A1, HERPUD1/HERP, OS9, SEL1L and UBE2J1. FAM8A1 binding to SYNV1 may promote recruitment of HERPUD1 to the HRD1 complex.

The protein localises to the endoplasmic reticulum membrane. Its function is as follows. Component of the endoplasmic reticulum quality control (ERQC) system also called ER-associated degradation (ERAD) involved in ubiquitin-dependent degradation of misfolded endoplasmic reticulum proteins. Binds to ubiquilins and this interaction is required for efficient degradation of CD3D via the ERAD pathway. In Mus musculus (Mouse), this protein is Homocysteine-responsive endoplasmic reticulum-resident ubiquitin-like domain member 1 protein (Herpud1).